Reading from the N-terminus, the 396-residue chain is MCWPLLYPLVLGLSISLAEGIQTPSIYDDVESTRGSHEGPLGPTVELKEPKSSDKPNPRGYPGKFCANDSDTLELPASSQALLLGWVPTRLVPALYGLVVAVGLPANGLALWVLATRVPRLPSTILLMNLAVADLLLALVLPPRLAYHLRGQRWPFGEAACRVATAALYGHMYGSVLLLAAVSLDRYLALVHPLRARALRGQRLTTGLCLVAWLSAATLALPLTLHRQTFRLAGSDRMLCHDALPLTEQTSHWRPAFICLAVLGCFVPLLAMGLCYGATLRALAANGQRYSHALRLTALVLFSAVASFTPSNVLLVLHYSNPSPEAWGNLYGAYVPSLALSTLNSCVDPFIYYYVSHEFREKVRAMLCRQPEASSSSQASREAGSRGTAICSSTLL.

The first 16 residues, M1–S16, serve as a signal peptide directing secretion. Residues L17–R59 constitute a propeptide, removed for receptor activation. A disordered region spans residues D28–P62. A compositionally biased stretch (basic and acidic residues) spans E46–N57. At G60 to A94 the chain is on the extracellular side. A glycan (N-linked (GlcNAc...) asparagine) is linked at N68. A helical membrane pass occupies residues L95 to A115. The Cytoplasmic portion of the chain corresponds to T116–R120. Residues L121–L141 form a helical membrane-spanning segment. At P142–R162 the chain is on the extracellular side. Residues C161 and C240 are joined by a disulfide bond. A helical transmembrane segment spans residues V163–S183. Residues L184–R203 are Cytoplasmic-facing. A helical membrane pass occupies residues L204–T224. At L225–P255 the chain is on the extracellular side. The helical transmembrane segment at A256 to Y276 threads the bilayer. Over G277–R295 the chain is Cytoplasmic. A helical transmembrane segment spans residues L296 to V316. Topologically, residues L317–Y331 are extracellular. The helical transmembrane segment at G332–V355 threads the bilayer. The Cytoplasmic portion of the chain corresponds to S356–L396.

Belongs to the G-protein coupled receptor 1 family. In terms of processing, a proteolytic cleavage generates a new N-terminus that functions as a tethered ligand. Highly expressed in the spleen. Slight expression in the heart, lung, skeletal muscle and kidney. No detectable expression in brain, liver or testis. Also detected in platelets.

It is found in the cell membrane. Its function is as follows. Receptor for activated thrombin or trypsin coupled to G proteins that stimulate phosphoinositide hydrolysis. May play a role in platelets activation. The polypeptide is Proteinase-activated receptor 4 (F2rl3) (Mus musculus (Mouse)).